Reading from the N-terminus, the 1063-residue chain is Cellulose synthase A catalytic subunit 7 [UDP-forming] (1063 aa).

Topologically, residues 1 to 213 (MDTASVTGGE…IPSSKINPYR (213 aa)) are cytoplasmic. Zn(2+)-binding residues include C18, C21, C37, C40, C45, C48, C60, and C63. The RING-type; degenerate zinc finger occupies 18–64 (CRVCGEEVAAREDGKPFVACAECGFPVCKPCYEYERSEGTQCCPQCN). The tract at residues 116 to 154 (NGEQPAQKWRPGGPALSSFTGSVAGKDLEQEREMEGGME) is disordered. A compositionally biased stretch (basic and acidic residues) spans 141 to 154 (KDLEQEREMEGGME). The chain crosses the membrane as a helical span at residues 214–234 (IVIVLRLVVLCFFLKFRITTP). The Extracellular portion of the chain corresponds to 235–237 (AMD). A helical membrane pass occupies residues 238–258 (AVPLWLASVICELWFALSWIL). Residues 259–845 (DQLPKWSPVT…TNTIVYPFTS (587 aa)) lie on the Cytoplasmic side of the membrane. Residues S297, K303, E304, and D333 each contribute to the UDP-alpha-D-glucose site. D333 is a catalytic residue. Positions 387–414 (VKERRAMKREYEEFKVRINALVAKAQKK) form a coiled coil. K474 contacts UDP-alpha-D-glucose. Positions 475 and 499 each coordinate Mn(2+). Residue D762 is part of the active site. Residues 846 to 866 (IPLLAYCTIPAVCLLTGKFII) traverse the membrane as a helical segment. The Extracellular segment spans residues 867-871 (PTLNN). Residues 872 to 892 (LASIWFIALFLSIIATGVLEL) form a helical membrane-spanning segment. Topologically, residues 893–907 (RWSGVSIEDWWRNEQ) are cytoplasmic. The helical transmembrane segment at 908–928 (FWVIGGVSAHLFAVFQGLLKV) threads the bilayer. The Extracellular portion of the chain corresponds to 929–959 (LGGVDTNFTVTSKAAADETDAFGELYLFKWT). N935 carries N-linked (GlcNAc...) asparagine glycosylation. The helical transmembrane segment at 960–980 (TLLVPPTTLIIINMVGIVAGV) threads the bilayer. At 981–991 (SDAVNNGYGSW) the chain is on the cytoplasmic side. A helical membrane pass occupies residues 992–1012 (GPLFGKLFFSFWVILHLYPFL). At 1013–1021 (KGLMGRQNR) the chain is on the extracellular side. A helical membrane pass occupies residues 1022-1042 (TPTIVVLWSILLASIFSLVWV). At 1043–1063 (RIDPFIPKPKGPVLKPCGVSC) the chain is on the cytoplasmic side.

Belongs to the glycosyltransferase 2 family. Plant cellulose synthase subfamily. Mn(2+) serves as cofactor. The cofactor is Zn(2+).

Its subcellular location is the cell membrane. It catalyses the reaction [(1-&gt;4)-beta-D-glucosyl](n) + UDP-alpha-D-glucose = [(1-&gt;4)-beta-D-glucosyl](n+1) + UDP + H(+). It participates in glycan metabolism; plant cellulose biosynthesis. In terms of biological role, catalytic subunit of cellulose synthase terminal complexes ('rosettes'), required for beta-1,4-glucan microfibril crystallization, a major mechanism of the cell wall formation. Involved in the secondary cell wall formation. The polypeptide is Cellulose synthase A catalytic subunit 7 [UDP-forming] (CESA7) (Oryza sativa subsp. japonica (Rice)).